The chain runs to 295 residues: SPX domain-containing protein 1 (295 aa).

In terms of domain architecture, SPX spans 1–166; that stretch reads MKFGKSLSSQ…GALIRLPFIQ (166 aa). Positions 197–227 are disordered; sequence NELPVSSEDGRGDSTNEDKPSNPSSSLVNGG. The span at 204 to 216 shows a compositional bias: basic and acidic residues; sequence EDGRGDSTNEDKP.

As to quaternary structure, interacts (via SPX domain) with PHR2 (via C-terminus). Interacts with RLI1 in the nucleus to prevents its positive regulation of leaf inclination during phosphate (Pi) starvation.

It localises to the nucleus. Involved in plant adaptation to phosphate (Pi) starvation. Inhibits PHR2 DNA-binding activity via a Pi-dependent protein interaction. Suppresses the regulation on expression of PT2 by PHR2 and accumulation of shoot Pi. Optimizes growth under phosphate-limited conditions through a negative feedback loop of the PSI (phosphate starvation-induced) signaling pathway. Regulates the expression of SPX2, SPX3 and SPX5. May be an important link between signal transduction pathways related to phosphate starvation and cold stress. Together with SPX2, plays a negative role in the regulation of leaf inclination by preventing RLI1 transcription factor activity in Pi depleted conditions. This chain is SPX domain-containing protein 1, found in Oryza sativa subsp. indica (Rice).